Reading from the N-terminus, the 176-residue chain is Isopentenyl-diphosphate Delta-isomerase (176 aa).

The Mn(2+) site is built by His22 and His28. Residues 26–160 (LRHKAVSVFV…PERYTPWLRI (135 aa)) enclose the Nudix hydrolase domain. Cys62 is an active-site residue. His64 lines the Mn(2+) pocket. Position 82 (Glu82) interacts with Mg(2+). Mn(2+) is bound by residues Glu108 and Glu110. Glu110 is a catalytic residue.

This sequence belongs to the IPP isomerase type 1 family. It depends on Mg(2+) as a cofactor. Mn(2+) serves as cofactor.

The protein localises to the cytoplasm. It catalyses the reaction isopentenyl diphosphate = dimethylallyl diphosphate. Its pathway is isoprenoid biosynthesis; dimethylallyl diphosphate biosynthesis; dimethylallyl diphosphate from isopentenyl diphosphate: step 1/1. The protein operates within porphyrin-containing compound metabolism; chlorophyll biosynthesis. In terms of biological role, catalyzes the 1,3-allylic rearrangement of the homoallylic substrate isopentenyl (IPP) to its highly electrophilic allylic isomer, dimethylallyl diphosphate (DMAPP). The protein is Isopentenyl-diphosphate Delta-isomerase of Dinoroseobacter shibae (strain DSM 16493 / NCIMB 14021 / DFL 12).